We begin with the raw amino-acid sequence, 758 residues long: Dolichyl-phosphooligosaccharide-protein glycotransferase 2 (758 aa).

At 1-6 (MKRRYS) the chain is on the cytoplasmic side. A helical membrane pass occupies residues 7–27 (ILIILLVAIFYRMITFRFKYL). Residues 28 to 92 (LGYDPYFHLA…KVFGVSLTTT (65 aa)) lie on the Extracellular side of the membrane. The DXD motif 1 signature appears at 29 to 31 (GYD). A Mn(2+)-binding site is contributed by D31. The chain crosses the membrane as a helical span at residues 93–113 (FKITPVIFGVLTVIFLYLSLL). Topologically, residues 114 to 120 (KLYDEKR) are cytoplasmic. Residues 121-141 (AFFGGFFLAISYGHVFRSMAN) form a helical membrane-spanning segment. The Extracellular segment spans residues 142 to 145 (YYRG). Mn(2+) contacts are provided by R144 and D146. A DXD motif 2 motif is present at residues 144–146 (RGD). Residues 146-166 (DNYMLFWYSVALLGISLALGI) form a helical membrane-spanning segment. The Cytoplasmic segment spans residues 167–175 (KKGKWKYKR). Transmembrane regions (helical) follow at residues 176–196 (LIFY…WQAY) and 197–217 (YPIF…AFIL). Residues 218-226 (KKDKYLLDS) are Cytoplasmic-facing. A helical membrane pass occupies residues 227-247 (IILILSTAFGVLLANYLGGIF). Residues 248–281 (GYGMLGYAKWLGKSVAKKLGLEFGYLKDVYLILH) lie on the Extracellular side of the membrane. Residues 282-302 (LKYLVPISLSFVLVLILLGFL) form a helical membrane-spanning segment. The Cytoplasmic segment spans residues 303–310 (TKDIRIRS). A helical transmembrane segment spans residues 311-331 (LFLGIASFIGIIILFKRFEAL). Residues 332–352 (KELSTGFGIFKEAPILETQPT) are Extracellular-facing. Residues 340-343 (IFKE) carry the TIXE motif motif. Residues 353-373 (SFKDLWAAFSLSFFLTPLFFI) traverse the membrane as a helical segment. Residues 374–379 (RFKKPR) lie on the Cytoplasmic side of the membrane. The chain crosses the membrane as a helical span at residues 380-400 (VEDFLTLGLIIPSVYMLKTWT). A topological domain (extracellular) is located at residue R401. R401 contacts a glycophospholipid. The chain crosses the membrane as a helical span at residues 402–422 (FLFIGSMAIAIMSGIGIVELY). Over 423–433 (EAIKPRLNGKK) the chain is Cytoplasmic. Residues 434–454 (ALATGIITLVILPGVIAGLSF) traverse the membrane as a helical segment. Residues 455–758 (KEVCSLHPEM…DRGVFRLSYN (304 aa)) lie on the Extracellular side of the membrane. The tract at residues 488–490 (WWD) is interacts with target acceptor peptide in protein substrate. The WWDYG motif motif lies at 488–492 (WWDWG). A DK motif motif is present at residues 540–547 (DFLKFGAI).

The protein belongs to the STT3 family. Mn(2+) is required as a cofactor. Mg(2+) serves as cofactor.

The protein localises to the cell membrane. It carries out the reaction an archaeal dolichyl phosphooligosaccharide + [protein]-L-asparagine = an archaeal dolichyl phosphate + a glycoprotein with the oligosaccharide chain attached by N-beta-D-glycosyl linkage to a protein L-asparagine.. It participates in protein modification; protein glycosylation. Oligosaccharyl transferase (OST) that catalyzes the initial transfer of a defined glycan (ManNAcXyl(2)GlcAMan(2)GalNAc in Pyrococcus) from the lipid carrier dolichol-monophosphate to an asparagine residue within an Asn-X-Ser/Thr consensus motif in nascent polypeptide chains, the first step in protein N-glycosylation. This chain is Dolichyl-phosphooligosaccharide-protein glycotransferase 2 (aglB2), found in Pyrococcus horikoshii (strain ATCC 700860 / DSM 12428 / JCM 9974 / NBRC 100139 / OT-3).